The following is an 858-amino-acid chain: DNA mismatch repair protein MutS (858 aa).

G613 to S620 is a binding site for ATP.

It belongs to the DNA mismatch repair MutS family.

Functionally, this protein is involved in the repair of mismatches in DNA. It is possible that it carries out the mismatch recognition step. This protein has a weak ATPase activity. The protein is DNA mismatch repair protein MutS of Dehalococcoides mccartyi (strain CBDB1).